Consider the following 140-residue polypeptide: Holo-[acyl-carrier-protein] synthase (140 aa).

Mg(2+) contacts are provided by Asp-8 and Glu-62.

It belongs to the P-Pant transferase superfamily. AcpS family. It depends on Mg(2+) as a cofactor.

The protein resides in the cytoplasm. The enzyme catalyses apo-[ACP] + CoA = holo-[ACP] + adenosine 3',5'-bisphosphate + H(+). Its function is as follows. Transfers the 4'-phosphopantetheine moiety from coenzyme A to a Ser of acyl-carrier-protein. This chain is Holo-[acyl-carrier-protein] synthase, found in Cupriavidus taiwanensis (strain DSM 17343 / BCRC 17206 / CCUG 44338 / CIP 107171 / LMG 19424 / R1) (Ralstonia taiwanensis (strain LMG 19424)).